A 221-amino-acid polypeptide reads, in one-letter code: Ribosomal RNA small subunit methyltransferase G (221 aa).

The S-adenosyl-L-methionine site is built by glycine 78, phenylalanine 83, and arginine 150.

Belongs to the methyltransferase superfamily. RNA methyltransferase RsmG family.

Its subcellular location is the cytoplasm. Its function is as follows. Specifically methylates the N7 position of a guanine in 16S rRNA. This chain is Ribosomal RNA small subunit methyltransferase G, found in Bifidobacterium longum (strain DJO10A).